Reading from the N-terminus, the 243-residue chain is Type III pantothenate kinase (243 aa).

Residue 6-13 (DIGNTNLK) coordinates ATP. Position 101 to 104 (101 to 104 (GSDI)) interacts with substrate. Aspartate 103 functions as the Proton acceptor in the catalytic mechanism. Residue threonine 125 coordinates ATP. Position 176 (threonine 176) interacts with substrate.

The protein belongs to the type III pantothenate kinase family. In terms of assembly, homodimer. Requires NH4(+) as cofactor. It depends on K(+) as a cofactor.

The protein localises to the cytoplasm. It carries out the reaction (R)-pantothenate + ATP = (R)-4'-phosphopantothenate + ADP + H(+). It functions in the pathway cofactor biosynthesis; coenzyme A biosynthesis; CoA from (R)-pantothenate: step 1/5. In terms of biological role, catalyzes the phosphorylation of pantothenate (Pan), the first step in CoA biosynthesis. This chain is Type III pantothenate kinase, found in Mycoplasma mobile (strain ATCC 43663 / 163K / NCTC 11711) (Mesomycoplasma mobile).